Reading from the N-terminus, the 410-residue chain is MMTRRKKRSCSNQKKEEEKSERIPFDLVIEILLRLPVKSIARFRYVSKLWQSTLRGQHFTESYLTISSSRPKILFTCLKDCETFFFSSPHPQDLSPIAANLHMSFPISCPSNICRPVRGWLCGLHQRTTKGTTVTEPLICNPSTGESVVLRKVKTRRKGVISFLGFDPIDKNFKVLCMTRSCIGRADSEEHQVHTLETGKKPSRKMIECDILHYPVPVEHTNGFSQYDGVCINGVLYYLAIVHGVSDDRYPDVVCFEFGSDKFKYIKKVAGHDMEILYLGRRLNSILVNYKGKLAKLQPNMPNNVCTGIQLWVLEDAEKHEWSSHIYVLPPPWRNVYEETKLCFVGTTRKGEIVLSPNTISDFFYLLYYNPDRNTITIVKIKGMETFQSHKAYTFLDHLEDVNLVPIWRM.

The F-box domain occupies 17 to 66 (EEKSERIPFDLVIEILLRLPVKSIARFRYVSKLWQSTLRGQHFTESYLTI).

This Arabidopsis thaliana (Mouse-ear cress) protein is F-box protein At3g61340.